A 105-amino-acid polypeptide reads, in one-letter code: Large ribosomal subunit protein uL24 (105 aa).

Belongs to the universal ribosomal protein uL24 family. In terms of assembly, part of the 50S ribosomal subunit.

Its function is as follows. One of two assembly initiator proteins, it binds directly to the 5'-end of the 23S rRNA, where it nucleates assembly of the 50S subunit. One of the proteins that surrounds the polypeptide exit tunnel on the outside of the subunit. In Clostridium botulinum (strain 657 / Type Ba4), this protein is Large ribosomal subunit protein uL24.